Here is a 432-residue protein sequence, read N- to C-terminus: Putative cyclin-F1-4 (432 aa).

It belongs to the cyclin family. Cyclin F subfamily.

The sequence is that of Putative cyclin-F1-4 (CycF1-4) from Oryza sativa subsp. japonica (Rice).